The following is a 490-amino-acid chain: MFRIQLRTMSSKTCKSDYPKEFVSFLNSSHSPYHTVHNIKKHLVSNGFKELSERDSWAGHVAQKGKYFVTRNGSSIIAFAVGGKWEPGNPIAITGAHTDSPALRIKPISKRVSEKYLQVGVETYGGAIWHSWFDKDLGVAGRVFVKDAKTGKSIARLVDLNRPLLKIPTLAIHLDRDVNQKFEFNRETQLLPIGGLQEDKTEAKTEKEINNGEFTSIKTIVQRHHAELLGLIAKELAIDTIEDIEDFELILYDHNASTLGGFNDEFVFSGRLDNLTSCFTSMHGLTLAADTEIDRESGIRLMACFDHEEIGSSSAQGADSNFLPNILERLSILKGDGSDQTKPLFHSAILETSAKSFFLSSDVAHAVHPNYANKYESQHKPLLGGGPVIKINANQRYMTNSPGLVLVKRLAEAAKVPLQLFVVANDSPCGSTIGPILASKTGIRTLDLGNPVLSMHSIRETGGSADLEFQIKLFKEFFERYTSIESEIVV.

His-97 lines the Zn(2+) pocket. Substrate is bound at residue His-173. Zn(2+)-binding residues include Asp-273, Glu-308, Glu-309, and Asp-362. Substrate is bound at residue Glu-308. Substrate-binding residues include Asp-362, His-365, Lys-390, and Tyr-397. Position 456 (His-456) interacts with Zn(2+).

It belongs to the peptidase M18 family. Tetrahedron-shaped homododecamer built from six homodimers. The cofactor is Zn(2+).

Its subcellular location is the cytoplasm. The protein resides in the vacuole lumen. It carries out the reaction Release of an N-terminal aspartate or glutamate from a peptide, with a preference for aspartate.. The metalloproteases inhibitors EDTA and 1.10-phenanthroline both inhibit the activity, whereas bestatin, an inhibitor of most aminopeptidases, does not affect enzyme activity. Its function is as follows. Aspartyl aminopeptidase that contributes to peptide degradation both in the cytosol and the vacuole. Cells may respond to environmental conditions by changing the distributions of the cytosolic enzyme to the vacuole when cells need more active vacuolar degradation. The polypeptide is Aspartyl aminopeptidase 4 (APE4) (Saccharomyces cerevisiae (strain ATCC 204508 / S288c) (Baker's yeast)).